The chain runs to 139 residues: Large-conductance mechanosensitive channel (139 aa).

A run of 2 helical transmembrane segments spans residues 9-29 (AFAVKGNVVDMAVGIIIGAAF) and 79-99 (IQTVIDFVIVAFAIFMGVKAI).

It belongs to the MscL family. As to quaternary structure, homopentamer.

The protein resides in the cell inner membrane. Its function is as follows. Channel that opens in response to stretch forces in the membrane lipid bilayer. May participate in the regulation of osmotic pressure changes within the cell. The sequence is that of Large-conductance mechanosensitive channel from Pseudomonas putida (strain W619).